Consider the following 477-residue polypeptide: Nuclear receptor subfamily 6 group A member 1-A (477 aa).

The segment at residues 40–115 is a DNA-binding region (nuclear receptor); sequence QRSCLICGDR…MGMNRKAIRE (76 aa). 2 consecutive NR C4-type zinc fingers follow at residues 43 to 63 and 79 to 98; these read CLICGDRATGLHYGIISCEGC and CSRDKNCEMSRKQRNRCQYC. Positions 147-187 are disordered; sequence DEANMPEHTWGNNGDSDHSSPGNGVSDGNQPSPVSTLSSNR. Residues 156 to 187 are compositionally biased toward polar residues; that stretch reads WGNNGDSDHSSPGNGVSDGNQPSPVSTLSSNR. One can recognise an NR LBD domain in the interval 230–461; it reads QSHTLIGQLV…HSCKSSLSSY (232 aa).

It belongs to the nuclear hormone receptor family. NR6 subfamily. In terms of assembly, homodimer. Expressed in germ cells, being predominant in previtellogenic oocytes in the ovary and in spermatocytes in the testis.

Its subcellular location is the nucleus. Its function is as follows. Probable orphan nuclear receptor. Binds to a response element containing repeats of the motif 5'-AGGTCA-3'. The sequence is that of Nuclear receptor subfamily 6 group A member 1-A from Danio rerio (Zebrafish).